The chain runs to 152 residues: Transcriptional repressor NrdR (152 aa).

A zinc finger spans residues 3-34; it reads CPYCNASETKVIDSRLAAEGAQVRRRRSCNSC. One can recognise an ATP-cone domain in the interval 49-139; that stretch reads PRIIKSSGKI…VYRDFQDIDA (91 aa).

Belongs to the NrdR family. It depends on Zn(2+) as a cofactor.

Functionally, negatively regulates transcription of bacterial ribonucleotide reductase nrd genes and operons by binding to NrdR-boxes. This is Transcriptional repressor NrdR from Psychrobacter cryohalolentis (strain ATCC BAA-1226 / DSM 17306 / VKM B-2378 / K5).